Reading from the N-terminus, the 162-residue chain is Probable chemoreceptor glutamine deamidase CheD (162 aa).

This sequence belongs to the CheD family.

It catalyses the reaction L-glutaminyl-[protein] + H2O = L-glutamyl-[protein] + NH4(+). Probably deamidates glutamine residues to glutamate on methyl-accepting chemotaxis receptors (MCPs), playing an important role in chemotaxis. This Clostridium kluyveri (strain ATCC 8527 / DSM 555 / NBRC 12016 / NCIMB 10680 / K1) protein is Probable chemoreceptor glutamine deamidase CheD.